A 100-amino-acid polypeptide reads, in one-letter code: Small ribosomal subunit protein uS14c (100 aa).

This sequence belongs to the universal ribosomal protein uS14 family. In terms of assembly, part of the 30S ribosomal subunit.

It localises to the plastid. The protein localises to the chloroplast. In terms of biological role, binds 16S rRNA, required for the assembly of 30S particles. The chain is Small ribosomal subunit protein uS14c from Liriodendron tulipifera (Tuliptree).